Consider the following 249-residue polypeptide: MNLGEKLAEGKTKIVYAHPTDPTLAIIVHKDGISAGDGARRHTIPGKGALSGRTTANVFTMLNRAGVATHFVAAPEPSVMVVYRCAMIPLEVVNRRIATGSYIRRNPDVAEGTRFDPPLLEFFLKDDARHDPQMTPDEIIAQGIASADEVEQMASESRRVFLLIEEAWAAQDVVLCDLKIEFGRDTSGRLLVADVIDNDSWRIWPGGVKERMLDKQVYRNMPVVTDEGLEQVRRLYEEVAQRTDAWVNQ.

The protein belongs to the SAICAR synthetase family.

It carries out the reaction 5-amino-1-(5-phospho-D-ribosyl)imidazole-4-carboxylate + L-aspartate + ATP = (2S)-2-[5-amino-1-(5-phospho-beta-D-ribosyl)imidazole-4-carboxamido]succinate + ADP + phosphate + 2 H(+). It participates in purine metabolism; IMP biosynthesis via de novo pathway; 5-amino-1-(5-phospho-D-ribosyl)imidazole-4-carboxamide from 5-amino-1-(5-phospho-D-ribosyl)imidazole-4-carboxylate: step 1/2. The chain is Phosphoribosylaminoimidazole-succinocarboxamide synthase from Roseiflexus sp. (strain RS-1).